Here is a 254-residue protein sequence, read N- to C-terminus: Thiazole synthase (254 aa).

Lysine 95 (schiff-base intermediate with DXP) is an active-site residue. 1-deoxy-D-xylulose 5-phosphate is bound by residues glycine 156, 182–183, and 204–205; these read AG and NT.

Belongs to the ThiG family. Homotetramer. Forms heterodimers with either ThiH or ThiS.

It localises to the cytoplasm. It catalyses the reaction [ThiS sulfur-carrier protein]-C-terminal-Gly-aminoethanethioate + 2-iminoacetate + 1-deoxy-D-xylulose 5-phosphate = [ThiS sulfur-carrier protein]-C-terminal Gly-Gly + 2-[(2R,5Z)-2-carboxy-4-methylthiazol-5(2H)-ylidene]ethyl phosphate + 2 H2O + H(+). Its pathway is cofactor biosynthesis; thiamine diphosphate biosynthesis. Its function is as follows. Catalyzes the rearrangement of 1-deoxy-D-xylulose 5-phosphate (DXP) to produce the thiazole phosphate moiety of thiamine. Sulfur is provided by the thiocarboxylate moiety of the carrier protein ThiS. In vitro, sulfur can be provided by H(2)S. In Shewanella oneidensis (strain ATCC 700550 / JCM 31522 / CIP 106686 / LMG 19005 / NCIMB 14063 / MR-1), this protein is Thiazole synthase.